Here is a 638-residue protein sequence, read N- to C-terminus: NADH-ubiquinone oxidoreductase chain 5 (638 aa).

15 helical membrane-spanning segments follow: residues 7–27, 66–86, 112–132, 169–189, 203–223, 242–262, 275–295, 307–327, 335–354, 365–385, 404–424, 445–465, 487–507, 520–540, and 618–638; these read TIVS…IFFF, FAIS…LISV, FLLD…TWSI, LFLV…LISW, AVIY…LAVL, FVLF…AQFG, TPVS…FLLV, ANTI…STAI, IIAY…IGIG, THAF…HSLN, SACL…AGFY, LGIV…FFCF, ALLR…NFIF, GLPL…LSYL, and YIAS…IVLS.

It belongs to the complex I subunit 5 family.

It is found in the mitochondrion inner membrane. It catalyses the reaction a ubiquinone + NADH + 5 H(+)(in) = a ubiquinol + NAD(+) + 4 H(+)(out). In terms of biological role, core subunit of the mitochondrial membrane respiratory chain NADH dehydrogenase (Complex I) that is believed to belong to the minimal assembly required for catalysis. Complex I functions in the transfer of electrons from NADH to the respiratory chain. The immediate electron acceptor for the enzyme is believed to be ubiquinone. The sequence is that of NADH-ubiquinone oxidoreductase chain 5 (ND5) from Paracentrotus lividus (Common sea urchin).